Consider the following 187-residue polypeptide: Elongation factor P (187 aa).

Belongs to the elongation factor P family.

The protein localises to the cytoplasm. The protein operates within protein biosynthesis; polypeptide chain elongation. In terms of biological role, involved in peptide bond synthesis. Stimulates efficient translation and peptide-bond synthesis on native or reconstituted 70S ribosomes in vitro. Probably functions indirectly by altering the affinity of the ribosome for aminoacyl-tRNA, thus increasing their reactivity as acceptors for peptidyl transferase. The chain is Elongation factor P from Wolinella succinogenes (strain ATCC 29543 / DSM 1740 / CCUG 13145 / JCM 31913 / LMG 7466 / NCTC 11488 / FDC 602W) (Vibrio succinogenes).